Here is a 127-residue protein sequence, read N- to C-terminus: Fluoride-specific ion channel FluC 1 (127 aa).

4 helical membrane-spanning segments follow: residues 3-23 (LLIV…VGQW), 35-55 (IAML…FGLY), 74-94 (IGFF…VLLI), and 102-122 (LFSY…LGFY). Glycine 78 and threonine 81 together coordinate Na(+).

This sequence belongs to the fluoride channel Fluc/FEX (TC 1.A.43) family.

The protein localises to the cell membrane. The catalysed reaction is fluoride(in) = fluoride(out). With respect to regulation, na(+) is not transported, but it plays an essential structural role and its presence is essential for fluoride channel function. In terms of biological role, fluoride-specific ion channel. Important for reducing fluoride concentration in the cell, thus reducing its toxicity. This chain is Fluoride-specific ion channel FluC 1, found in Halalkalibacterium halodurans (strain ATCC BAA-125 / DSM 18197 / FERM 7344 / JCM 9153 / C-125) (Bacillus halodurans).